The chain runs to 1028 residues: Beta-galactosidase (1028 aa).

2 residues coordinate substrate: N104 and D203. D203 provides a ligand contact to Na(+). Mg(2+)-binding residues include E418, H420, and E463. Substrate-binding positions include E463 and 539-542 (EYAH). Residue E463 is the Proton donor of the active site. The Nucleophile role is filled by E539. A Mg(2+)-binding site is contributed by N599. Na(+) contacts are provided by F603 and N606. 2 residues coordinate substrate: N606 and W1004.

It belongs to the glycosyl hydrolase 2 family. In terms of assembly, homodimer. The cofactor is Mg(2+). It depends on Mn(2+) as a cofactor. Fe cation is required as a cofactor. Requires Na(+) as cofactor. K(+) serves as cofactor.

It catalyses the reaction Hydrolysis of terminal non-reducing beta-D-galactose residues in beta-D-galactosides.. Its activity is regulated as follows. Completely inhibited by Hg(2+), Cu(2+) Ag(2+), and partially inhibited by Zn(2+), imidazole and EDTA. Activated by Ca(2+), Co(2+), Ni(2+). In terms of biological role, this beta-galactosidase is also able to catalyze glycosyl transfer to a series of acceptors, including hexose, pentose, beta- or alpha-disaccharides, hexahydroxy alcohol, cyclitol, and aromatic glycosides, resulting in the production of galacto-oligosaccharides (GOS). In Enterobacter agglomerans (Erwinia herbicola), this protein is Beta-galactosidase (lacZ).